The sequence spans 210 residues: 7-cyano-7-deazaguanine synthase 2 (210 aa).

10–20 (HSGGMDSTTCL) contributes to the ATP binding site. Residues C180, C193, C196, and C199 each coordinate Zn(2+).

Belongs to the QueC family. The cofactor is Zn(2+).

The enzyme catalyses 7-carboxy-7-deazaguanine + NH4(+) + ATP = 7-cyano-7-deazaguanine + ADP + phosphate + H2O + H(+). It functions in the pathway purine metabolism; 7-cyano-7-deazaguanine biosynthesis. Functionally, catalyzes the ATP-dependent conversion of 7-carboxy-7-deazaguanine (CDG) to 7-cyano-7-deazaguanine (preQ(0)). This Rhodopseudomonas palustris (strain HaA2) protein is 7-cyano-7-deazaguanine synthase 2.